A 395-amino-acid polypeptide reads, in one-letter code: Tryptophan synthase beta chain (395 aa).

Position 89 is an N6-(pyridoxal phosphate)lysine (Lys89).

The protein belongs to the TrpB family. Tetramer of two alpha and two beta chains. Requires pyridoxal 5'-phosphate as cofactor.

The enzyme catalyses (1S,2R)-1-C-(indol-3-yl)glycerol 3-phosphate + L-serine = D-glyceraldehyde 3-phosphate + L-tryptophan + H2O. The protein operates within amino-acid biosynthesis; L-tryptophan biosynthesis; L-tryptophan from chorismate: step 5/5. The beta subunit is responsible for the synthesis of L-tryptophan from indole and L-serine. The polypeptide is Tryptophan synthase beta chain (Fusobacterium nucleatum subsp. nucleatum (strain ATCC 25586 / DSM 15643 / BCRC 10681 / CIP 101130 / JCM 8532 / KCTC 2640 / LMG 13131 / VPI 4355)).